The following is a 432-amino-acid chain: Adenylosuccinate synthetase (432 aa).

GTP-binding positions include 13–19 (GDEGKGK) and 41–43 (GHT). D14 acts as the Proton acceptor in catalysis. Residues D14 and G41 each contribute to the Mg(2+) site. IMP-binding positions include 14–17 (DEGK), 39–42 (NAGH), T130, R144, Q225, T240, and R304. The Proton donor role is filled by H42. Residue 300–306 (AVTGRPR) coordinates substrate. Residues R306, 332–334 (KLD), and 415–417 (STG) contribute to the GTP site.

The protein belongs to the adenylosuccinate synthetase family. As to quaternary structure, homodimer. It depends on Mg(2+) as a cofactor.

The protein resides in the cytoplasm. The enzyme catalyses IMP + L-aspartate + GTP = N(6)-(1,2-dicarboxyethyl)-AMP + GDP + phosphate + 2 H(+). It functions in the pathway purine metabolism; AMP biosynthesis via de novo pathway; AMP from IMP: step 1/2. Plays an important role in the de novo pathway of purine nucleotide biosynthesis. Catalyzes the first committed step in the biosynthesis of AMP from IMP. The chain is Adenylosuccinate synthetase from Histophilus somni (strain 2336) (Haemophilus somnus).